We begin with the raw amino-acid sequence, 366 residues long: UDP-N-acetylglucosamine--N-acetylmuramyl-(pentapeptide) pyrophosphoryl-undecaprenol N-acetylglucosamine transferase (366 aa).

UDP-N-acetyl-alpha-D-glucosamine is bound by residues 14-16, Asn-125, Arg-168, Ser-196, and Gln-297; that span reads TGG.

It belongs to the glycosyltransferase 28 family. MurG subfamily.

It localises to the cell inner membrane. The catalysed reaction is di-trans,octa-cis-undecaprenyl diphospho-N-acetyl-alpha-D-muramoyl-L-alanyl-D-glutamyl-meso-2,6-diaminopimeloyl-D-alanyl-D-alanine + UDP-N-acetyl-alpha-D-glucosamine = di-trans,octa-cis-undecaprenyl diphospho-[N-acetyl-alpha-D-glucosaminyl-(1-&gt;4)]-N-acetyl-alpha-D-muramoyl-L-alanyl-D-glutamyl-meso-2,6-diaminopimeloyl-D-alanyl-D-alanine + UDP + H(+). It participates in cell wall biogenesis; peptidoglycan biosynthesis. Its function is as follows. Cell wall formation. Catalyzes the transfer of a GlcNAc subunit on undecaprenyl-pyrophosphoryl-MurNAc-pentapeptide (lipid intermediate I) to form undecaprenyl-pyrophosphoryl-MurNAc-(pentapeptide)GlcNAc (lipid intermediate II). The protein is UDP-N-acetylglucosamine--N-acetylmuramyl-(pentapeptide) pyrophosphoryl-undecaprenol N-acetylglucosamine transferase of Rhodopseudomonas palustris (strain BisB5).